The primary structure comprises 579 residues: Membrane frizzled-related protein (579 aa).

The Cytoplasmic portion of the chain corresponds to 1-69 (MKDFSDVILC…RPDCRFSWLC (69 aa)). The helical; Signal-anchor for type II membrane protein transmembrane segment at 70 to 90 (VLLLSSLLLLLLGLLVAIILA) threads the bilayer. At 91 to 579 (QLQAAPPSGA…AADLEACAQP (489 aa)) the chain is on the extracellular side. A disordered region spans residues 100-143 (ASHSPLPAGGLTTTTTTPTITTSQAAGTPKGQQESGVSPSPQST). Residues 111–121 (TTTTTTPTITT) show a composition bias toward low complexity. A compositionally biased stretch (polar residues) spans 122–143 (SQAAGTPKGQQESGVSPSPQST). 2 cysteine pairs are disulfide-bonded: C144–C170 and C197–C216. Residues 144–253 (CGGLLSGPRG…FGFHAWYQAM (110 aa)) enclose the CUB 1 domain. The N-linked (GlcNAc...) asparagine glycan is linked to N227. Residues 259–295 (SCAHDEFRCDQLICLLPDSVCDGFANCADGSDETNCS) enclose the LDL-receptor class A 1 domain. 5 disulfides stabilise this stretch: C260-C272, C267-C285, C279-C294, C301-C327, and C354-C377. In terms of domain architecture, CUB 2 spans 301–414 (CGGNLTGLQG…GGFSATYLAF (114 aa)). N415 is a glycosylation site (N-linked (GlcNAc...) asparagine). Residues 420 to 455 (PCGPSELSCQAGGCKGVQWMCDMWRDCTDGSDDNCS) enclose the LDL-receptor class A 2 domain. 8 disulfide bridges follow: C421–C433, C428–C446, C440–C454, C466–C528, C474–C521, C512–C549, C538–C576, and C542–C564. One can recognise an FZ domain in the interval 461-579 (PPELACEPVQ…AADLEACAQP (119 aa)).

Interacts with C1QTNF5. In terms of tissue distribution, specifically expressed in brain. Strongly expressed in medulla oblongata and to a lower extent in hippocampus and corpus callosum. Expressed in keratinocytes.

Its subcellular location is the apical cell membrane. In terms of biological role, may play a role in eye development. This is Membrane frizzled-related protein (MFRP) from Homo sapiens (Human).